We begin with the raw amino-acid sequence, 231 residues long: NADH-ubiquinone oxidoreductase chain 4 (231 aa).

The next 6 helical transmembrane spans lie at Pro-1–Ile-21, Thr-34–Leu-54, Ser-61–Ile-80, Trp-84–Leu-106, Ile-118–Leu-138, and Leu-156–Leu-178.

This sequence belongs to the complex I subunit 4 family.

It is found in the mitochondrion membrane. The enzyme catalyses a ubiquinone + NADH + 5 H(+)(in) = a ubiquinol + NAD(+) + 4 H(+)(out). Functionally, core subunit of the mitochondrial membrane respiratory chain NADH dehydrogenase (Complex I) that is believed to belong to the minimal assembly required for catalysis. Complex I functions in the transfer of electrons from NADH to the respiratory chain. The immediate electron acceptor for the enzyme is believed to be ubiquinone. In Trimeresurus albolabris (White-lipped pit viper), this protein is NADH-ubiquinone oxidoreductase chain 4 (MT-ND4).